A 331-amino-acid polypeptide reads, in one-letter code: GTP 3',8-cyclase (331 aa).

Residues 9 to 233 (SFGRQVTYVR…TATNEHTGGP (225 aa)) enclose the Radical SAM core domain. Arg18 is a GTP binding site. Positions 25 and 29 each coordinate [4Fe-4S] cluster. Tyr31 lines the S-adenosyl-L-methionine pocket. A [4Fe-4S] cluster-binding site is contributed by Cys32. Position 67 (Arg67) interacts with GTP. An S-adenosyl-L-methionine-binding site is contributed by Gly71. Thr98 lines the GTP pocket. Ser122 contributes to the S-adenosyl-L-methionine binding site. Lys159 serves as a coordination point for GTP. S-adenosyl-L-methionine is bound at residue Met193. [4Fe-4S] cluster is bound by residues Cys257 and Cys260. 262–264 (RVR) provides a ligand contact to GTP. A [4Fe-4S] cluster-binding site is contributed by Cys274.

It belongs to the radical SAM superfamily. MoaA family. Monomer and homodimer. The cofactor is [4Fe-4S] cluster.

It catalyses the reaction GTP + AH2 + S-adenosyl-L-methionine = (8S)-3',8-cyclo-7,8-dihydroguanosine 5'-triphosphate + 5'-deoxyadenosine + L-methionine + A + H(+). It functions in the pathway cofactor biosynthesis; molybdopterin biosynthesis. Catalyzes the cyclization of GTP to (8S)-3',8-cyclo-7,8-dihydroguanosine 5'-triphosphate. The polypeptide is GTP 3',8-cyclase (Saccharophagus degradans (strain 2-40 / ATCC 43961 / DSM 17024)).